We begin with the raw amino-acid sequence, 310 residues long: MRIVFAGTPEFAAEHLKALLDSPYEIVAVYTQPDRPAGRGQKLMPSAVKALAVAHDIPVFQPQTLRNADAQAELAALKPDLMVVVAYGLILPQVVLDIPRLGCINSHASLLPRWRGAAPIQRAVEAGDAESGVTVMRMEAGLDTGPMLLKVVTPISAEDTGGTLHDRLAEMGPPAVVQAIAGLADGSLQGEIQDDALATYAHKLNKDEARIDWTRPAVELERLIRAFNPWPVCHSMLDGESVKVLAANLSTGQGAPGEILSASKDGLVVACGDQALSLTRLQLPGGKALSFSDLFNSRREKFAAGKVLGQ.

109–112 serves as a coordination point for (6S)-5,6,7,8-tetrahydrofolate; the sequence is SLLP.

It belongs to the Fmt family.

It carries out the reaction L-methionyl-tRNA(fMet) + (6R)-10-formyltetrahydrofolate = N-formyl-L-methionyl-tRNA(fMet) + (6S)-5,6,7,8-tetrahydrofolate + H(+). Its function is as follows. Attaches a formyl group to the free amino group of methionyl-tRNA(fMet). The formyl group appears to play a dual role in the initiator identity of N-formylmethionyl-tRNA by promoting its recognition by IF2 and preventing the misappropriation of this tRNA by the elongation apparatus. This chain is Methionyl-tRNA formyltransferase, found in Pseudomonas putida (strain ATCC 700007 / DSM 6899 / JCM 31910 / BCRC 17059 / LMG 24140 / F1).